A 240-amino-acid polypeptide reads, in one-letter code: 1-(5-phosphoribosyl)-5-[(5-phosphoribosylamino)methylideneamino] imidazole-4-carboxamide isomerase (240 aa).

Aspartate 8 serves as the catalytic Proton acceptor. Aspartate 129 serves as the catalytic Proton donor.

It belongs to the HisA/HisF family.

It is found in the cytoplasm. The catalysed reaction is 1-(5-phospho-beta-D-ribosyl)-5-[(5-phospho-beta-D-ribosylamino)methylideneamino]imidazole-4-carboxamide = 5-[(5-phospho-1-deoxy-D-ribulos-1-ylimino)methylamino]-1-(5-phospho-beta-D-ribosyl)imidazole-4-carboxamide. Its pathway is amino-acid biosynthesis; L-histidine biosynthesis; L-histidine from 5-phospho-alpha-D-ribose 1-diphosphate: step 4/9. This chain is 1-(5-phosphoribosyl)-5-[(5-phosphoribosylamino)methylideneamino] imidazole-4-carboxamide isomerase, found in Dinoroseobacter shibae (strain DSM 16493 / NCIMB 14021 / DFL 12).